The primary structure comprises 40 residues: Photosystem II reaction center protein J (40 aa).

The helical transmembrane segment at 8–28 threads the bilayer; it reads IPLWLIGTVTGILVIGLIGVF.

This sequence belongs to the PsbJ family. PSII is composed of 1 copy each of membrane proteins PsbA, PsbB, PsbC, PsbD, PsbE, PsbF, PsbH, PsbI, PsbJ, PsbK, PsbL, PsbM, PsbT, PsbX, PsbY, PsbZ, Psb30/Ycf12, at least 3 peripheral proteins of the oxygen-evolving complex and a large number of cofactors. It forms dimeric complexes.

The protein resides in the plastid. It is found in the chloroplast thylakoid membrane. In terms of biological role, one of the components of the core complex of photosystem II (PSII). PSII is a light-driven water:plastoquinone oxidoreductase that uses light energy to abstract electrons from H(2)O, generating O(2) and a proton gradient subsequently used for ATP formation. It consists of a core antenna complex that captures photons, and an electron transfer chain that converts photonic excitation into a charge separation. This is Photosystem II reaction center protein J from Nymphaea alba (White water-lily).